Here is a 1100-residue protein sequence, read N- to C-terminus: Isoleucine--tRNA ligase (1100 aa).

A 'HIGH' region motif is present at residues 48–58 (PFATGLPHFGH). The 'KMSKS' region signature appears at 626–630 (KMSKS). Residue lysine 629 participates in ATP binding.

This sequence belongs to the class-I aminoacyl-tRNA synthetase family. IleS type 2 subfamily. As to quaternary structure, monomer. Zn(2+) serves as cofactor.

It localises to the cytoplasm. The enzyme catalyses tRNA(Ile) + L-isoleucine + ATP = L-isoleucyl-tRNA(Ile) + AMP + diphosphate. Its function is as follows. Catalyzes the attachment of isoleucine to tRNA(Ile). As IleRS can inadvertently accommodate and process structurally similar amino acids such as valine, to avoid such errors it has two additional distinct tRNA(Ile)-dependent editing activities. One activity is designated as 'pretransfer' editing and involves the hydrolysis of activated Val-AMP. The other activity is designated 'posttransfer' editing and involves deacylation of mischarged Val-tRNA(Ile). The sequence is that of Isoleucine--tRNA ligase from Treponema denticola (strain ATCC 35405 / DSM 14222 / CIP 103919 / JCM 8153 / KCTC 15104).